Here is a 271-residue protein sequence, read N- to C-terminus: Tryptophan synthase alpha chain (271 aa).

Catalysis depends on proton acceptor residues Glu49 and Asp60.

It belongs to the TrpA family. Tetramer of two alpha and two beta chains.

The catalysed reaction is (1S,2R)-1-C-(indol-3-yl)glycerol 3-phosphate + L-serine = D-glyceraldehyde 3-phosphate + L-tryptophan + H2O. It functions in the pathway amino-acid biosynthesis; L-tryptophan biosynthesis; L-tryptophan from chorismate: step 5/5. In terms of biological role, the alpha subunit is responsible for the aldol cleavage of indoleglycerol phosphate to indole and glyceraldehyde 3-phosphate. This is Tryptophan synthase alpha chain from Burkholderia pseudomallei (strain 1106a).